Consider the following 60-residue polypeptide: Large ribosomal subunit protein uL30 (60 aa).

It belongs to the universal ribosomal protein uL30 family. As to quaternary structure, part of the 50S ribosomal subunit.

The polypeptide is Large ribosomal subunit protein uL30 (Baumannia cicadellinicola subsp. Homalodisca coagulata).